The primary structure comprises 196 residues: MAFKDWMNNLRDYFVEDDEEFNEPTRPVQESRPTVASTPKPKVEERKVQADYQSRRPAQTTPKPQTQTAAPKRSASTFSKPMPEKIVQQQTVSQAQSLAATVSTIAIKEPRAYADIMESARIVKNGECVLVNFKFMGDAQARRSIDFMTGVVFTLDGDIQNVGGQIFLMTPANITVDAAKEMSILAGQNFESYDIY.

The disordered stretch occupies residues 15–80 (VEDDEEFNEP…PKRSASTFSK (66 aa)). Residues 57-72 (PAQTTPKPQTQTAAPK) are compositionally biased toward low complexity.

The protein belongs to the SepF family. In terms of assembly, homodimer. Interacts with FtsZ.

The protein resides in the cytoplasm. Cell division protein that is part of the divisome complex and is recruited early to the Z-ring. Probably stimulates Z-ring formation, perhaps through the cross-linking of FtsZ protofilaments. Its function overlaps with FtsA. The sequence is that of Cell division protein SepF from Lactococcus lactis subsp. cremoris (strain MG1363).